The primary structure comprises 277 residues: Sulfur carrier protein FdhD (277 aa).

Cys121 serves as the catalytic Cysteine persulfide intermediate. Residue 260–265 (FCKPGR) coordinates Mo-bis(molybdopterin guanine dinucleotide).

Belongs to the FdhD family.

Its subcellular location is the cytoplasm. Its function is as follows. Required for formate dehydrogenase (FDH) activity. Acts as a sulfur carrier protein that transfers sulfur from IscS to the molybdenum cofactor prior to its insertion into FDH. This Escherichia coli O8 (strain IAI1) protein is Sulfur carrier protein FdhD.